We begin with the raw amino-acid sequence, 938 residues long: Isoleucine--tRNA ligase (938 aa).

The 'HIGH' region motif lies at 58–68 (PYANGSIHIGH). Lys183 carries the post-translational modification N6-acetyllysine. Glu561 is a binding site for L-isoleucyl-5'-AMP. The 'KMSKS' region signature appears at 602–606 (KMSKS). Lys605 lines the ATP pocket. 4 residues coordinate Zn(2+): Cys901, Cys904, Cys921, and Cys924.

The protein belongs to the class-I aminoacyl-tRNA synthetase family. IleS type 1 subfamily. In terms of assembly, monomer. Zn(2+) is required as a cofactor.

Its subcellular location is the cytoplasm. It catalyses the reaction tRNA(Ile) + L-isoleucine + ATP = L-isoleucyl-tRNA(Ile) + AMP + diphosphate. Catalyzes the attachment of isoleucine to tRNA(Ile). As IleRS can inadvertently accommodate and process structurally similar amino acids such as valine, to avoid such errors it has two additional distinct tRNA(Ile)-dependent editing activities. One activity is designated as 'pretransfer' editing and involves the hydrolysis of activated Val-AMP. The other activity is designated 'posttransfer' editing and involves deacylation of mischarged Val-tRNA(Ile). The chain is Isoleucine--tRNA ligase from Escherichia fergusonii (strain ATCC 35469 / DSM 13698 / CCUG 18766 / IAM 14443 / JCM 21226 / LMG 7866 / NBRC 102419 / NCTC 12128 / CDC 0568-73).